Reading from the N-terminus, the 583-residue chain is Leucine-rich repeat-containing protein 47 (583 aa).

Position 2 is an N-acetylalanine (Ala-2). LRR repeat units lie at residues Gln-76–Leu-95, Ala-100–Gly-121, Gln-130–Ala-152, Arg-154–Pro-175, Leu-180–Ala-202, Ser-203–Pro-225, and Lys-226–Val-246. The disordered stretch occupies residues Val-260–Asp-300. The span at Gly-270 to Arg-281 shows a compositional bias: basic and acidic residues. A phosphoserine mark is found at Ser-315 and Ser-431. Positions Leu-402–Arg-437 form a coiled coil. Tyr-509 carries the post-translational modification Phosphotyrosine. The segment at Asn-513–Gly-544 is disordered. Ser-518 and Ser-520 each carry phosphoserine.

In Homo sapiens (Human), this protein is Leucine-rich repeat-containing protein 47 (LRRC47).